A 379-amino-acid polypeptide reads, in one-letter code: Inositol 3-kinase (379 aa).

Residues serine 217, 267 to 270, and asparagine 294 contribute to the ATP site; that span reads GAGD. The active-site Proton acceptor is aspartate 270.

Belongs to the carbohydrate kinase pfkB family.

The catalysed reaction is myo-inositol + ATP = 1D-myo-inositol 3-phosphate + ADP + H(+). Functionally, kinase that phosphorylates myo-inositol to produce multiple myo-inositol monophosphates, Ins(1)P, Ins(3)P, Ins(4)P, Ins(5)P and Ins(6)P. Participates in phytic acid biosynthesis in developing seeds. Phytic acid is the primary storage form of phosphorus in cereal grains and other plant seeds. The chain is Inositol 3-kinase from Zea mays (Maize).